The sequence spans 534 residues: NAD(P)H-quinone oxidoreductase chain 4 (534 aa).

A run of 14 helical transmembrane segments spans residues Phe-6 to Ile-26, Trp-38 to Gln-58, Met-91 to Val-111, Leu-117 to Asp-137, Leu-138 to Ile-158, Phe-171 to Phe-191, Leu-214 to His-234, Thr-245 to Ile-265, Phe-279 to Phe-299, Met-316 to Leu-336, Gln-337 to Asp-357, Ile-377 to Ala-399, Val-419 to Met-439, and Ile-466 to Ile-486.

This sequence belongs to the complex I subunit 4 family.

It is found in the cellular thylakoid membrane. The catalysed reaction is a plastoquinone + NADH + (n+1) H(+)(in) = a plastoquinol + NAD(+) + n H(+)(out). The enzyme catalyses a plastoquinone + NADPH + (n+1) H(+)(in) = a plastoquinol + NADP(+) + n H(+)(out). Its function is as follows. NDH-1 shuttles electrons from NAD(P)H, via FMN and iron-sulfur (Fe-S) centers, to quinones in the respiratory chain. The immediate electron acceptor for the enzyme in this species is believed to be plastoquinone. Couples the redox reaction to proton translocation (for every two electrons transferred, four hydrogen ions are translocated across the cytoplasmic membrane), and thus conserves the redox energy in a proton gradient. The polypeptide is NAD(P)H-quinone oxidoreductase chain 4 (Acaryochloris marina (strain MBIC 11017)).